Reading from the N-terminus, the 112-residue chain is Cytochrome c6 (112 aa).

A signal peptide spans 1–25 (MKTLLTILALTLVTLTTWLSTPAFA). 4 residues coordinate heme c: cysteine 39, cysteine 42, histidine 43, and methionine 83.

The protein belongs to the cytochrome c family. PetJ subfamily. Monomer. Binds 1 heme c group covalently per subunit.

It localises to the cellular thylakoid lumen. Functions as an electron carrier between membrane-bound cytochrome b6-f and photosystem I in oxygenic photosynthesis. The protein is Cytochrome c6 of Synechococcus sp. (strain ATCC 27167 / PCC 6312).